We begin with the raw amino-acid sequence, 308 residues long: GMP synthase [glutamine-hydrolyzing] subunit B (308 aa).

Residues 2–183 (LNPSDFIEEA…LGLPREMIQR (182 aa)) enclose the GMPS ATP-PPase domain. 29–35 (SGGVDSS) is a binding site for ATP.

Heterodimer composed of a glutamine amidotransferase subunit (A) and a GMP-binding subunit (B).

The enzyme catalyses XMP + L-glutamine + ATP + H2O = GMP + L-glutamate + AMP + diphosphate + 2 H(+). The protein operates within purine metabolism; GMP biosynthesis; GMP from XMP (L-Gln route): step 1/1. Its function is as follows. Catalyzes the synthesis of GMP from XMP. This Methanothermobacter thermautotrophicus (strain ATCC 29096 / DSM 1053 / JCM 10044 / NBRC 100330 / Delta H) (Methanobacterium thermoautotrophicum) protein is GMP synthase [glutamine-hydrolyzing] subunit B (guaAB).